Reading from the N-terminus, the 126-residue chain is Spermidine export protein MdtJ (126 aa).

4 helical membrane-spanning segments follow: residues 1-21, 30-50, 54-74, and 81-101; these read MIYW…TLSM, ITGH…LSLA, VALG…ITLF, and EPFS…IVML.

Belongs to the drug/metabolite transporter (DMT) superfamily. Small multidrug resistance (SMR) (TC 2.A.7.1) family. MdtJ subfamily. Forms a complex with MdtI.

It localises to the cell inner membrane. Its function is as follows. Catalyzes the excretion of spermidine. The polypeptide is Spermidine export protein MdtJ (Sodalis glossinidius (strain morsitans)).